The sequence spans 309 residues: Olfactory receptor 10J5 (309 aa).

The Extracellular portion of the chain corresponds to 1–27 (MQRNNFTEVIEFVFLGFSSFGKHQITL). The helical transmembrane segment at 28 to 48 (FVVFLTIYILTLAGNIIIVTI) threads the bilayer. Residues 49–57 (THIDHHLHT) lie on the Cytoplasmic side of the membrane. The chain crosses the membrane as a helical span at residues 58–78 (PMYFFLSMLASSETVYTLVIV). The Extracellular segment spans residues 79 to 84 (PRMLSS). A helical transmembrane segment spans residues 85-105 (LIFYNLPISLAGCATQMFFFV). Residues cysteine 97 and cysteine 178 are joined by a disulfide bond. Over 106–131 (TLATNNCFLLTAMGYDRYVAICNPLR) the chain is Cytoplasmic. A helical transmembrane segment spans residues 132–152 (YTIIMSKGMCALLVCGSLGTG). Over 153-203 (LVMAVLHVPAMFHLPFCGTVVEHFFCDIYPVMKLSCVDTTVNEIINYGVSS) the chain is Extracellular. The helical transmembrane segment at 204–224 (FVILVPIGLIFISYVLIVSSI) threads the bilayer. Topologically, residues 225–235 (LKIVSTEGQKK) are cytoplasmic. A helical membrane pass occupies residues 236 to 256 (AFATCASHLTVVIVHYGCASI). The Extracellular segment spans residues 257-270 (AYLKPKSESSVEKD). The chain crosses the membrane as a helical span at residues 271 to 291 (LLLSVTYTIITPLLNPVVYSL). Residues 292–309 (RNKEVKDALCRAVGRNTS) lie on the Cytoplasmic side of the membrane.

The protein belongs to the G-protein coupled receptor 1 family. Expressed in the olfactory epithelium as well as in the testis. Expressed in round spermatids during stages VI-VIII of spermatogenesis.

The protein localises to the cell membrane. In terms of biological role, olfactory receptor. Activated by the synthetic floral odorant, lyral, and by alpha-cedrene, a sesquiterpene constituent of cedarwood oil. Its activation increases intracellular Ca(2+). Acts as a key regulator of myogenesis through its actions on cell migration and adhesion by activating the Ca(2+)-dependent AKT signal transduction pathway. Also acts as a regulator of angiogenesis. Moreover, plays a role in the regulation of lipid accumulation in hepatocytes via the cAMP-PKA pathway. Involved in sperm chemotaxis and motility. The protein is Olfactory receptor 10J5 of Mus musculus (Mouse).